The following is a 432-amino-acid chain: Histidinol dehydrogenase (432 aa).

3 residues coordinate substrate: Ser240, Gln262, and His265. Gln262 and His265 together coordinate Zn(2+). Active-site proton acceptor residues include Glu330 and His331. Residues His331, Asp364, Glu418, and His423 each coordinate substrate. Asp364 provides a ligand contact to Zn(2+). His423 lines the Zn(2+) pocket.

The protein belongs to the histidinol dehydrogenase family. Zn(2+) serves as cofactor.

The catalysed reaction is L-histidinol + 2 NAD(+) + H2O = L-histidine + 2 NADH + 3 H(+). The protein operates within amino-acid biosynthesis; L-histidine biosynthesis; L-histidine from 5-phospho-alpha-D-ribose 1-diphosphate: step 9/9. Functionally, catalyzes the sequential NAD-dependent oxidations of L-histidinol to L-histidinaldehyde and then to L-histidine. This is Histidinol dehydrogenase from Wolinella succinogenes (strain ATCC 29543 / DSM 1740 / CCUG 13145 / JCM 31913 / LMG 7466 / NCTC 11488 / FDC 602W) (Vibrio succinogenes).